The chain runs to 288 residues: dTDP-4-keto-6-deoxy-D-glucose reductase (288 aa).

NADH-binding positions include 12–14, 38–39, 62–64, Tyr-127, and Lys-131; these read GML, DI, and AWT. Residues 13–14, 38–39, 62–64, Tyr-127, and Lys-131 each bind NADPH; these read ML, DI, and AWT. The Proton donor/acceptor role is filled by Tyr-127.

It belongs to the dTDP-4-dehydrorhamnose reductase family. The cofactor is Mg(2+).

It participates in antibiotic biosynthesis; novobiocin biosynthesis. Reduces the product formed from the reaction of NovW with dTDP-4-keto-6-deoxy-D-glucose to result in dTDP-5-methyl-L-rhamnose in the novobiocin biosynthesis pathway, an aminocoumarin family antibiotic that targets bacterial DNA gyrases. This is dTDP-4-keto-6-deoxy-D-glucose reductase (novS) from Streptomyces niveus (Streptomyces spheroides).